A 79-amino-acid polypeptide reads, in one-letter code: Raniseptin-3 (79 aa).

Positions 1 to 22 (MAFLKKSLFLVLFLGIVSLSIC) are cleaved as a signal peptide. A propeptide spanning residues 23–49 (EEEKREGEEEEKQEEENEELSEEELRE) is cleaved from the precursor.

It belongs to the frog skin active peptide (FSAP) family. Dermaseptin subfamily. As to expression, expressed by the skin glands.

The protein localises to the secreted. Functionally, has antibacterial activity. The protein is Raniseptin-3 of Boana raniceps (Chaco tree frog).